A 290-amino-acid chain; its full sequence is 4-diphosphocytidyl-2-C-methyl-D-erythritol kinase (290 aa).

Lys-13 is a catalytic residue. Residue 96–106 participates in ATP binding; that stretch reads PMGGGIGGGSS. Asp-138 is a catalytic residue.

It belongs to the GHMP kinase family. IspE subfamily.

It catalyses the reaction 4-CDP-2-C-methyl-D-erythritol + ATP = 4-CDP-2-C-methyl-D-erythritol 2-phosphate + ADP + H(+). Its pathway is isoprenoid biosynthesis; isopentenyl diphosphate biosynthesis via DXP pathway; isopentenyl diphosphate from 1-deoxy-D-xylulose 5-phosphate: step 3/6. Catalyzes the phosphorylation of the position 2 hydroxy group of 4-diphosphocytidyl-2C-methyl-D-erythritol. The protein is 4-diphosphocytidyl-2-C-methyl-D-erythritol kinase of Vibrio campbellii (strain ATCC BAA-1116).